Consider the following 351-residue polypeptide: 1-acylglycerol-3-phosphate O-acyltransferase ABHD5 (351 aa).

Residues 79-184 (PLVLLHGFGG…LILVEPWGFP (106 aa)) form the AB hydrolase-1 domain. S124 bears the Phosphoserine mark. The HXXXXD motif signature appears at 329-334 (HYVYAD).

It belongs to the peptidase S33 family. ABHD4/ABHD5 subfamily. As to quaternary structure, interacts with ADRP and PLIN. Interacts with PNPLA2. Interacts with PLIN5; promotes interaction with PNPLA2.

It localises to the cytoplasm. The protein resides in the lipid droplet. The catalysed reaction is a 1-acyl-sn-glycero-3-phosphate + an acyl-CoA = a 1,2-diacyl-sn-glycero-3-phosphate + CoA. It catalyses the reaction 1-(9Z-octadecenoyl)-sn-glycero-3-phosphate + (9Z)-octadecenoyl-CoA = 1,2-di-(9Z-octadecenoyl)-sn-glycero-3-phosphate + CoA. It carries out the reaction 1-(9Z-octadecenoyl)-sn-glycero-3-phosphate + hexadecanoyl-CoA = 1-(9Z)-octadecenoyl-2-hexadecanoyl-sn-glycero-3-phosphate + CoA. The enzyme catalyses 1-(9Z-octadecenoyl)-sn-glycero-3-phosphate + octadecanoyl-CoA = 1-(9Z-octadecenoyl)-2-octadecanoyl-sn-glycero-3-phosphate + CoA. The catalysed reaction is 1-(9Z-octadecenoyl)-sn-glycero-3-phosphate + (5Z,8Z,11Z,14Z)-eicosatetraenoyl-CoA = 1-(9Z)-octadecenoyl-2-(5Z,8Z,11Z,14Z)-eicosatetraenoyl-sn-glycero-3-phosphate + CoA. It catalyses the reaction eicosanoyl-CoA + 1-(9Z-octadecenoyl)-sn-glycero-3-phosphate = 1-(9Z)-octadecenoyl-2-eicosanoyl-sn-glycero-3-phosphate + CoA. It carries out the reaction 1-hexadecanoyl-sn-glycero-3-phosphate + (9Z)-octadecenoyl-CoA = 1-hexadecanoyl-2-(9Z-octadecenoyl)-sn-glycero-3-phosphate + CoA. The enzyme catalyses 1-octadecanoyl-sn-glycero-3-phosphate + (9Z)-octadecenoyl-CoA = 1-octadecanoyl-2-(9Z-octadecenoyl)-sn-glycero-3-phosphate + CoA. The catalysed reaction is 1-(5Z,8Z,11Z,14Z-eicosatetraenoyl)-sn-glycero-3-phosphate + (9Z)-octadecenoyl-CoA = 1-(5Z,8Z,11Z,14Z)-eicosatetraenoyl-2-(9Z)-octadecenoyl-sn-glycero-3-phosphate + CoA. Acyltransferase activity is inhibited by detergents such as Triton X-100 and 3-[(3-cholamidopropyl)dimethylammonio]-1-propanesulfonate (CHAPS). Acyltransferase activity is inhibited by the presence of magnesium and calcium. Functionally, coenzyme A-dependent lysophosphatidic acid acyltransferase that catalyzes the transfer of an acyl group on a lysophosphatidic acid. Functions preferentially with 1-oleoyl-lysophosphatidic acid followed by 1-palmitoyl-lysophosphatidic acid, 1-stearoyl-lysophosphatidic acid and 1-arachidonoyl-lysophosphatidic acid as lipid acceptor. Functions preferentially with arachidonoyl-CoA followed by oleoyl-CoA as acyl group donors. Functions in phosphatidic acid biosynthesis. May regulate the cellular storage of triacylglycerol through activation of the phospholipase PNPLA2. Involved in keratinocyte differentiation. Regulates lipid droplet fusion. The chain is 1-acylglycerol-3-phosphate O-acyltransferase ABHD5 from Rattus norvegicus (Rat).